The chain runs to 380 residues: Chaperone protein DnaJ (380 aa).

The 65-residue stretch at 5–69 (DYYEILGVSK…QKRAHYDQFG (65 aa)) folds into the J domain. The CR-type zinc-finger motif lies at 135–217 (GKETDIEIPR…CGGTGRVKRR (83 aa)). Residues C148, C151, C165, C168, C191, C194, C205, and C208 each coordinate Zn(2+). 4 CXXCXGXG motif repeats span residues 148–155 (CNTCHGTG), 165–172 (CSYCHGTG), 191–198 (CPYCGGTG), and 205–212 (CTTCGGTG).

It belongs to the DnaJ family. In terms of assembly, homodimer. Zn(2+) serves as cofactor.

It localises to the cytoplasm. Functionally, participates actively in the response to hyperosmotic and heat shock by preventing the aggregation of stress-denatured proteins and by disaggregating proteins, also in an autonomous, DnaK-independent fashion. Unfolded proteins bind initially to DnaJ; upon interaction with the DnaJ-bound protein, DnaK hydrolyzes its bound ATP, resulting in the formation of a stable complex. GrpE releases ADP from DnaK; ATP binding to DnaK triggers the release of the substrate protein, thus completing the reaction cycle. Several rounds of ATP-dependent interactions between DnaJ, DnaK and GrpE are required for fully efficient folding. Also involved, together with DnaK and GrpE, in the DNA replication of plasmids through activation of initiation proteins. The protein is Chaperone protein DnaJ of Parageobacillus thermoglucosidasius (Geobacillus thermoglucosidasius).